A 394-amino-acid chain; its full sequence is Elongation factor Tu (394 aa).

The tr-type G domain occupies 10–204 (KPHINVGTIG…AMDNYIPIPE (195 aa)). The interval 19 to 26 (GHVDHGKT) is G1. 19 to 26 (GHVDHGKT) is a GTP binding site. Threonine 26 provides a ligand contact to Mg(2+). The segment at 60–64 (GITIN) is G2. The tract at residues 81–84 (DCPG) is G3. GTP is bound by residues 81–85 (DCPGH) and 136–139 (NKVD). Residues 136–139 (NKVD) are G4. Residues 174-176 (SAL) form a G5 region.

This sequence belongs to the TRAFAC class translation factor GTPase superfamily. Classic translation factor GTPase family. EF-Tu/EF-1A subfamily. In terms of assembly, monomer.

The protein resides in the cytoplasm. The enzyme catalyses GTP + H2O = GDP + phosphate + H(+). Functionally, GTP hydrolase that promotes the GTP-dependent binding of aminoacyl-tRNA to the A-site of ribosomes during protein biosynthesis. The sequence is that of Elongation factor Tu from Methylacidiphilum infernorum (isolate V4) (Methylokorus infernorum (strain V4)).